The sequence spans 307 residues: Ribosomal RNA small subunit methyltransferase H (307 aa).

S-adenosyl-L-methionine-binding positions include 33-35, aspartate 51, phenylalanine 82, aspartate 96, and glutamine 103; that span reads GGY.

It belongs to the methyltransferase superfamily. RsmH family.

It localises to the cytoplasm. It carries out the reaction cytidine(1402) in 16S rRNA + S-adenosyl-L-methionine = N(4)-methylcytidine(1402) in 16S rRNA + S-adenosyl-L-homocysteine + H(+). Functionally, specifically methylates the N4 position of cytidine in position 1402 (C1402) of 16S rRNA. In Rickettsia africae (strain ESF-5), this protein is Ribosomal RNA small subunit methyltransferase H.